Here is a 390-residue protein sequence, read N- to C-terminus: Queuine tRNA-ribosyltransferase (390 aa).

Catalysis depends on Asp92, which acts as the Proton acceptor. Residues 92-96, Asp146, Gln195, and Gly222 contribute to the substrate site; that span reads DSGGF. Positions 253 to 259 are RNA binding; the sequence is GVGTPED. Residue Asp272 is the Nucleophile of the active site. An RNA binding; important for wobble base 34 recognition region spans residues 277-281; the sequence is TRNAR. 4 residues coordinate Zn(2+): Cys310, Cys312, Cys315, and His354.

This sequence belongs to the queuine tRNA-ribosyltransferase family. As to quaternary structure, homodimer. Within each dimer, one monomer is responsible for RNA recognition and catalysis, while the other monomer binds to the replacement base PreQ1. It depends on Zn(2+) as a cofactor.

The enzyme catalyses 7-aminomethyl-7-carbaguanine + guanosine(34) in tRNA = 7-aminomethyl-7-carbaguanosine(34) in tRNA + guanine. It participates in tRNA modification; tRNA-queuosine biosynthesis. Functionally, catalyzes the base-exchange of a guanine (G) residue with the queuine precursor 7-aminomethyl-7-deazaguanine (PreQ1) at position 34 (anticodon wobble position) in tRNAs with GU(N) anticodons (tRNA-Asp, -Asn, -His and -Tyr). Catalysis occurs through a double-displacement mechanism. The nucleophile active site attacks the C1' of nucleotide 34 to detach the guanine base from the RNA, forming a covalent enzyme-RNA intermediate. The proton acceptor active site deprotonates the incoming PreQ1, allowing a nucleophilic attack on the C1' of the ribose to form the product. After dissociation, two additional enzymatic reactions on the tRNA convert PreQ1 to queuine (Q), resulting in the hypermodified nucleoside queuosine (7-(((4,5-cis-dihydroxy-2-cyclopenten-1-yl)amino)methyl)-7-deazaguanosine). The sequence is that of Queuine tRNA-ribosyltransferase from Verminephrobacter eiseniae (strain EF01-2).